The sequence spans 484 residues: MAEADIAVIGLAVMGQNLILNMNDHGFTVCAFNRTVKLVDDFLANEAKGTKIIGAHSIEEMCKKLKRPRRVMMLIKAGTPVDMMIDAIVPHLEEGDIIIDGGNSEYTDSNRRSEQLAAKGIMFVGCGVSGGEEGARFGPSLMPGGNPKAWPHLKDIFQKIAAKSNGEPCCDWVGNAGSGHFVKMVHNGIEYGDMQLIAEAYHLLSKAVELNHDQMAEVLDDWNKGELESFLIEITANILKYRDEQGEPIVPKIRDSAGQKGTGKWTCFAALEYGLPVTLIGEAVFARCLSALKDERVRASKQLPRPQVSPDTVVQDKRVFIKQISKALYASKIVSYAQGFMLLAEASKQFNWNLNFGAIALMWRGGCIIRSRFLGDIEHAFQKNKQLSNLLLDDFFTKAITEAQDSWRVVVCAAVRLGIPVPAFSSALAFYDGYTSEVVPANLLQAQRDYFGAHTYELLAKPGTWVHTNWTGTGGRVTSNAYNA.

NADP(+) contacts are provided by residues 10–15, 33–35, 75–77, and asparagine 103; these read GLAVMG, NRT, and IKA. Substrate contacts are provided by residues asparagine 103 and 129 to 131; that span reads SGG. Lysine 183 serves as the catalytic Proton acceptor. A substrate-binding site is contributed by 186–187; it reads HN. Glutamate 190 (proton donor) is an active-site residue. Residues tyrosine 191, lysine 260, arginine 287, arginine 448, and histidine 454 each contribute to the substrate site.

The protein belongs to the 6-phosphogluconate dehydrogenase family. As to quaternary structure, homodimer.

It carries out the reaction 6-phospho-D-gluconate + NADP(+) = D-ribulose 5-phosphate + CO2 + NADPH. It participates in carbohydrate degradation; pentose phosphate pathway; D-ribulose 5-phosphate from D-glucose 6-phosphate (oxidative stage): step 3/3. Catalyzes the oxidative decarboxylation of 6-phosphogluconate to ribulose 5-phosphate and CO(2), with concomitant reduction of NADP to NADPH. This Caenorhabditis elegans protein is 6-phosphogluconate dehydrogenase, decarboxylating.